Here is a 369-residue protein sequence, read N- to C-terminus: Probable trehalose-phosphate phosphatase I (369 aa).

This sequence belongs to the trehalose phosphatase family. A divalent metal cation serves as cofactor.

It catalyses the reaction alpha,alpha-trehalose 6-phosphate + H2O = alpha,alpha-trehalose + phosphate. The protein operates within glycan biosynthesis; trehalose biosynthesis. Its function is as follows. Removes the phosphate from trehalose 6-phosphate to produce free trehalose. Trehalose accumulation in plant may improve abiotic stress tolerance. This chain is Probable trehalose-phosphate phosphatase I (TPPI), found in Arabidopsis thaliana (Mouse-ear cress).